A 346-amino-acid chain; its full sequence is Biotin synthase (346 aa).

The Radical SAM core domain occupies 38–256 (QQVQVSTLLS…IAVARIMMPT (219 aa)). Positions 53, 57, and 60 each coordinate [4Fe-4S] cluster. 4 residues coordinate [2Fe-2S] cluster: Cys-97, Cys-128, Cys-188, and Arg-260.

This sequence belongs to the radical SAM superfamily. Biotin synthase family. Homodimer. [4Fe-4S] cluster serves as cofactor. The cofactor is [2Fe-2S] cluster.

It carries out the reaction (4R,5S)-dethiobiotin + (sulfur carrier)-SH + 2 reduced [2Fe-2S]-[ferredoxin] + 2 S-adenosyl-L-methionine = (sulfur carrier)-H + biotin + 2 5'-deoxyadenosine + 2 L-methionine + 2 oxidized [2Fe-2S]-[ferredoxin]. Its pathway is cofactor biosynthesis; biotin biosynthesis; biotin from 7,8-diaminononanoate: step 2/2. Its function is as follows. Catalyzes the conversion of dethiobiotin (DTB) to biotin by the insertion of a sulfur atom into dethiobiotin via a radical-based mechanism. The polypeptide is Biotin synthase (Salmonella gallinarum (strain 287/91 / NCTC 13346)).